We begin with the raw amino-acid sequence, 221 residues long: Protein-disulfide oxidoreductase DsbI (221 aa).

The helical transmembrane segment at Phe-27 to Phe-47 threads the bilayer. An intrachain disulfide couples Cys-56 to Cys-59. 2 consecutive transmembrane segments (helical) span residues Phe-64–Ile-84 and Leu-85–Val-105. Cys-128 and Cys-154 are disulfide-bonded. The chain crosses the membrane as a helical span at residues Leu-189–Val-209.

The protein belongs to the DsbB family. DsbI subfamily. As to quaternary structure, interacts with DsbL.

It localises to the cell inner membrane. In terms of biological role, required for disulfide bond formation in some proteins. Part of a redox system composed of DsbI and DsbL that mediates formation of an essential disulfide bond in AssT. The sequence is that of Protein-disulfide oxidoreductase DsbI from Lelliottia amnigena (Enterobacter amnigenus).